The following is a 122-amino-acid chain: Large ribosomal subunit protein uL14 (122 aa).

The protein belongs to the universal ribosomal protein uL14 family. As to quaternary structure, part of the 50S ribosomal subunit. Forms a cluster with proteins L3 and L19. In the 70S ribosome, L14 and L19 interact and together make contacts with the 16S rRNA in bridges B5 and B8.

Its function is as follows. Binds to 23S rRNA. Forms part of two intersubunit bridges in the 70S ribosome. This Buchnera aphidicola subsp. Schizaphis graminum (strain Sg) protein is Large ribosomal subunit protein uL14.